We begin with the raw amino-acid sequence, 689 residues long: Beta-galactosidase BbgII (689 aa).

Substrate contacts are provided by Arg122 and Asn160. The active-site Proton donor is Glu161. The active-site Nucleophile is Glu320. Substrate-binding positions include Trp328 and 368-371; that span reads EKWH.

This sequence belongs to the glycosyl hydrolase 42 family.

The enzyme catalyses Hydrolysis of terminal non-reducing beta-D-galactose residues in beta-D-galactosides.. This Bifidobacterium bifidum (strain DSM 20082 / JCM 1254 / BCRC 11844 / KCTC 3440 / E319f (Variant a)) protein is Beta-galactosidase BbgII.